The primary structure comprises 232 residues: Ion-translocating oxidoreductase complex subunit E (232 aa).

5 helical membrane-spanning segments follow: residues 39–59 (LGLG…ISLV), 69–89 (IPVF…LVNA), 93–113 (GLYM…IIIG), 128–148 (AFDG…LGAT), and 182–202 (SFLL…LIAL).

Belongs to the NqrDE/RnfAE family. In terms of assembly, the complex is composed of six subunits: RnfA, RnfB, RnfC, RnfD, RnfE and RnfG.

Its subcellular location is the cell inner membrane. Its function is as follows. Part of a membrane-bound complex that couples electron transfer with translocation of ions across the membrane. The protein is Ion-translocating oxidoreductase complex subunit E of Shewanella oneidensis (strain ATCC 700550 / JCM 31522 / CIP 106686 / LMG 19005 / NCIMB 14063 / MR-1).